Reading from the N-terminus, the 831-residue chain is Prickle-like protein 1 (831 aa).

One can recognise a PET domain in the interval 14–122 (FGCQRSSTSD…TIKLLSRAVM (109 aa)). 3 consecutive LIM zinc-binding domains span residues 124 to 189 (AVCE…LLKP), 189 to 249 (PRCS…LYAE), and 249 to 313 (EYCE…EDVH). A disordered region spans residues 313 to 342 (HASDSSDSAFQSARSRDSRRSVRMGKSSRS). Phosphoserine occurs at positions 315, 591, and 594. Disordered regions lie at residues 663–688 (FEER…NALN) and 763–831 (CSSS…CIIS). Residues 669-680 (RSHHHRRRRSRK) show a composition bias toward basic residues. S683 bears the Phosphoserine mark. The span at 815-831 (TKSKKKKGHKGKNCIIS) shows a compositional bias: basic residues. Cysteine methyl ester is present on C828. C828 carries the S-farnesyl cysteine lipid modification. Residues 829–831 (IIS) constitute a propeptide, removed in mature form.

It belongs to the prickle / espinas / testin family. As to quaternary structure, interacts with REST. In terms of tissue distribution, expressed at highest levels in placenta and at lower levels in lung, liver, kidney and pancreas. Expressed in thalamus, hippocampus, cerebral cortex, and cerebellum (in neurons rather than glia).

Its subcellular location is the nucleus membrane. The protein localises to the cytoplasm. It localises to the cytosol. Its function is as follows. Involved in the planar cell polarity pathway that controls convergent extension during gastrulation and neural tube closure. Convergent extension is a complex morphogenetic process during which cells elongate, move mediolaterally, and intercalate between neighboring cells, leading to convergence toward the mediolateral axis and extension along the anteroposterior axis. Necessary for nuclear localization of REST. May serve as nuclear receptor. This Homo sapiens (Human) protein is Prickle-like protein 1 (PRICKLE1).